The following is a 639-amino-acid chain: Chaperone protein HtpG (639 aa).

The a; substrate-binding stretch occupies residues 1–343 (MEATATKEHL…SNDLPLNVSR (343 aa)). Residues 344-564 (EILQESKDIE…THDMSGNLER (221 aa)) are b. Positions 565 to 639 (LLKSAGQKVT…QLFLSTGSKE (75 aa)) are c.

It belongs to the heat shock protein 90 family. Homodimer.

The protein resides in the cytoplasm. Its function is as follows. Molecular chaperone. Has ATPase activity. The protein is Chaperone protein HtpG of Nitrosospira multiformis (strain ATCC 25196 / NCIMB 11849 / C 71).